A 98-amino-acid chain; its full sequence is Large ribosomal subunit protein bL21 (98 aa).

The protein belongs to the bacterial ribosomal protein bL21 family. In terms of assembly, part of the 50S ribosomal subunit. Contacts protein L20.

Functionally, this protein binds to 23S rRNA in the presence of protein L20. The sequence is that of Large ribosomal subunit protein bL21 from Chloroherpeton thalassium (strain ATCC 35110 / GB-78).